The following is a 369-amino-acid chain: UDP-N-acetylglucosamine--N-acetylmuramyl-(pentapeptide) pyrophosphoryl-undecaprenol N-acetylglucosamine transferase (369 aa).

UDP-N-acetyl-alpha-D-glucosamine-binding positions include 15 to 17 (TGG), Asn-126, Arg-169, Ser-197, and Gln-299.

Belongs to the glycosyltransferase 28 family. MurG subfamily.

It localises to the cell inner membrane. It carries out the reaction di-trans,octa-cis-undecaprenyl diphospho-N-acetyl-alpha-D-muramoyl-L-alanyl-D-glutamyl-meso-2,6-diaminopimeloyl-D-alanyl-D-alanine + UDP-N-acetyl-alpha-D-glucosamine = di-trans,octa-cis-undecaprenyl diphospho-[N-acetyl-alpha-D-glucosaminyl-(1-&gt;4)]-N-acetyl-alpha-D-muramoyl-L-alanyl-D-glutamyl-meso-2,6-diaminopimeloyl-D-alanyl-D-alanine + UDP + H(+). It functions in the pathway cell wall biogenesis; peptidoglycan biosynthesis. Functionally, cell wall formation. Catalyzes the transfer of a GlcNAc subunit on undecaprenyl-pyrophosphoryl-MurNAc-pentapeptide (lipid intermediate I) to form undecaprenyl-pyrophosphoryl-MurNAc-(pentapeptide)GlcNAc (lipid intermediate II). The chain is UDP-N-acetylglucosamine--N-acetylmuramyl-(pentapeptide) pyrophosphoryl-undecaprenol N-acetylglucosamine transferase from Methylorubrum extorquens (strain PA1) (Methylobacterium extorquens).